We begin with the raw amino-acid sequence, 435 residues long: 5-hydroxybenzimidazole synthase (435 aa).

Substrate-binding positions include Met-95, Tyr-124, His-163, 186–188 (SKG), 227–230 (NGLR), and Glu-266. His-270 is a Zn(2+) binding site. Tyr-293 serves as a coordination point for substrate. Zn(2+) is bound at residue His-334. The [4Fe-4S] cluster site is built by Cys-410, Cys-413, and Cys-417.

It belongs to the ThiC family. 5-hydroxybenzimidazole synthase subfamily. Homodimer. [4Fe-4S] cluster is required as a cofactor.

The enzyme catalyses 5-amino-1-(5-phospho-beta-D-ribosyl)imidazole + AH2 + S-adenosyl-L-methionine = 5-hydroxybenzimidazole + 5'-deoxyadenosine + formate + L-methionine + A + NH4(+) + phosphate + 2 H(+). Its function is as follows. Catalyzes the conversion of aminoimidazole ribotide (AIR) to 5-hydroxybenzimidazole (5-HBI) in a radical S-adenosyl-L-methionine (SAM)-dependent reaction. Is thus involved in the anaerobic biosynthesis of the benzimidazole lower axial ligand of the cobamide produced by G.sulfurreducens. The chain is 5-hydroxybenzimidazole synthase from Geobacter sulfurreducens (strain ATCC 51573 / DSM 12127 / PCA).